The primary structure comprises 256 residues: Expansin-like B1 (256 aa).

Positions 1 to 24 (MAQLLRRHLPVILSLILFLSKATA) are cleaved as a signal peptide. An N-linked (GlcNAc...) asparagine glycan is attached at Asn27. In terms of domain architecture, Expansin-like EG45 spans 46-150 (NGACEYGAFG…RRVSCTYPNK (105 aa)). The Expansin-like CBD domain maps to 164 to 249 (NYLEFEIWYQ…NWTAGATYDS (86 aa)). Residues Asn189 and Asn240 are each glycosylated (N-linked (GlcNAc...) asparagine).

Belongs to the expansin family. Expansin-like B subfamily.

The protein resides in the secreted. The protein is Expansin-like B1 (EXLB1) of Oryza sativa subsp. japonica (Rice).